The sequence spans 764 residues: Probable 5-methyltetrahydropteroyltriglutamate--homocysteine methyltransferase (764 aa).

5-methyltetrahydropteroyltri-L-glutamate-binding residues include K19 and N126. S182 is modified (phosphoserine). T441 is subject to Phosphothreonine. Residues 442–444 and E495 each bind L-homocysteine; that span reads IGS. L-methionine contacts are provided by residues 442–444 and E495; that span reads IGS. 5-methyltetrahydropteroyltri-L-glutamate is bound by residues D500, Y523, 526-527, and W572; that span reads RC. Position 610 (D610) interacts with L-homocysteine. D610 contributes to the L-methionine binding site. Zn(2+) contacts are provided by H652, C654, and E676. The active-site Proton donor is the H703. C735 provides a ligand contact to Zn(2+).

Belongs to the vitamin-B12 independent methionine synthase family. Requires Zn(2+) as cofactor.

It localises to the nucleus. Its subcellular location is the cytoplasm. The catalysed reaction is 5-methyltetrahydropteroyltri-L-glutamate + L-homocysteine = tetrahydropteroyltri-L-glutamate + L-methionine. The protein operates within amino-acid biosynthesis; L-methionine biosynthesis via de novo pathway; L-methionine from L-homocysteine (MetE route): step 1/1. In terms of biological role, catalyzes the transfer of a methyl group from 5-methyltetrahydrofolate to homocysteine resulting in methionine formation. This Schizosaccharomyces pombe (strain 972 / ATCC 24843) (Fission yeast) protein is Probable 5-methyltetrahydropteroyltriglutamate--homocysteine methyltransferase (met26).